The primary structure comprises 235 residues: UPF0173 metal-dependent hydrolase Oant_3663 (235 aa).

This sequence belongs to the UPF0173 family.

The polypeptide is UPF0173 metal-dependent hydrolase Oant_3663 (Brucella anthropi (strain ATCC 49188 / DSM 6882 / CCUG 24695 / JCM 21032 / LMG 3331 / NBRC 15819 / NCTC 12168 / Alc 37) (Ochrobactrum anthropi)).